Consider the following 512-residue polypeptide: ATP synthase subunit alpha (512 aa).

169 to 176 lines the ATP pocket; that stretch reads GDRQTGKT.

The protein belongs to the ATPase alpha/beta chains family. F-type ATPases have 2 components, CF(1) - the catalytic core - and CF(0) - the membrane proton channel. CF(1) has five subunits: alpha(3), beta(3), gamma(1), delta(1), epsilon(1). CF(0) has three main subunits: a(1), b(2) and c(9-12). The alpha and beta chains form an alternating ring which encloses part of the gamma chain. CF(1) is attached to CF(0) by a central stalk formed by the gamma and epsilon chains, while a peripheral stalk is formed by the delta and b chains.

Its subcellular location is the cell inner membrane. It catalyses the reaction ATP + H2O + 4 H(+)(in) = ADP + phosphate + 5 H(+)(out). Its function is as follows. Produces ATP from ADP in the presence of a proton gradient across the membrane. The alpha chain is a regulatory subunit. The protein is ATP synthase subunit alpha of Rickettsia akari (strain Hartford).